A 189-amino-acid chain; its full sequence is Ras-like protein 1 (189 aa).

10–17 (GAGGVGKS) provides a ligand contact to GTP. Residues 32–40 (YDPTIEDSY) carry the Effector region motif. GTP contacts are provided by residues 57 to 61 (DTAGQ) and 116 to 119 (NKCD). The residue at position 186 (Cys-186) is a Cysteine methyl ester. The S-geranylgeranyl cysteine moiety is linked to residue Cys-186. The propeptide at 187 to 189 (KML) is removed in mature form.

Belongs to the small GTPase superfamily. Ras family.

It is found in the cell membrane. The catalysed reaction is GTP + H2O = GDP + phosphate + H(+). With respect to regulation, alternates between an inactive form bound to GDP and an active form bound to GTP. Activated by a guanine nucleotide-exchange factor (GEF) and inactivated by a GTPase-activating protein (GAP). In terms of biological role, ras proteins bind GDP/GTP and possess intrinsic GTPase activity. Plays a role in eye development by regulating cell growth, survival of postmitotic ommatidial cells and differentiation of photoreceptor cells. During larval development, mediates Ptth/tor signaling leading to the production of ecdysone, a hormone required for the initiation of metamorphosis. In Drosophila ananassae (Fruit fly), this protein is Ras-like protein 1.